The sequence spans 541 residues: Nuclear receptor subfamily 5 group A member 2 (541 aa).

The segment covering 1–10 has biased composition (polar residues); that stretch reads MSSNSDTGDL. The disordered stretch occupies residues 1-35; sequence MSSNSDTGDLQESLKHGLTPIGAGLPDRHGSPIPA. The nuclear receptor DNA-binding region spans 83–154; the sequence is EELCPVCGDK…KCLSVGMKLE (72 aa). 8 residues coordinate Zn(2+): Cys86, Cys89, Cys103, Cys106, Cys122, Cys128, Cys138, and Cys141. 2 NR C4-type zinc fingers span residues 86-106 and 122-146; these read CPVC…CESC and CIEN…FQKC. Positions 152 to 167 are C-terminal extension (CTE); that stretch reads KLEAVRADRMRGGRNK. Residues 168–187 carry the FTZ-F1 box motif; the sequence is FGPMYKRDRALKQQKKALIR. Residue Lys270 forms a Glycyl lysine isopeptide (Lys-Gly) (interchain with G-Cter in SUMO1) linkage. An NR LBD domain is found at 300–539; the sequence is SIPHLILELL…NLLIEMLHAK (240 aa). A phospholipid derivative-binding positions include 421–424, Tyr516, and Lys520; that span reads GATL. Residues 528-539 form an AF-2 region; that stretch reads YNNLLIEMLHAK.

The protein belongs to the nuclear hormone receptor family. NR5 subfamily. As to quaternary structure, monomer; Binds DNA as a monomer. Interacts with nuclear receptor corepressors NR0B1 and NR0B2; repressing NR5A2 nuclear receptor activity. Interacts with nuclear receptor coactivators CTNNB1, PPARGC1A and NCOA2; interaction takes place following ligand-binding and promotes target gene activation. Interacts (when sumoylated) with GPS2; interaction with GPS2 onto hepatic acute phase protein promoters prevents N-Cor corepressor complex dissociation. Interacts with HNF1A. Interacts with GRIP1. Post-translationally, sumoylated by SUMO1 at Lys-270 during the hepatic acute phase response, leading to promote interaction with GPS2 and prevent N-Cor corepressor complex dissociation. In terms of tissue distribution, abundantly expressed in pancreas, less in liver, very low levels in heart and lung. Expressed in the Hep-G2 cell line. Isoform 1 and isoform 2 seem to be present in fetal and adult liver and Hep-G2 cells.

Its subcellular location is the nucleus. It localises to the chromosome. With respect to regulation, activated by synthetic agonists RR-RJW100, SR-RJW100, endo sulfamide compound 6N and GSK8470. Functionally, orphan nuclear receptor that binds DNA as a monomer to the 5'-TCAAGGCCA-3' sequence and controls expression of target genes: regulates key biological processes, such as early embryonic development, cholesterol and bile acid synthesis pathways, as well as liver and pancreas morphogenesis. Ligand-binding causes conformational change which causes recruitment of coactivators, promoting target gene activation. The specific ligand is unknown, but specific phospholipids, such as phosphatidylethanolamine, phosphatidylserine, dilauroyl phosphatidylcholine and diundecanoyl phosphatidylcholine can act as ligand in vitro. Acts as a pioneer transcription factor, which unwraps target DNA from histones and elicits local opening of closed chromatin. Plays a central role during preimplantation stages of embryonic development. Plays a minor role in zygotic genome activation (ZGA) by regulating a small set of two-cell stage genes. Plays a major role in morula development (2-16 cells embryos) by acting as a master regulator at the 8-cell stage, controlling expression of lineage-specifying transcription factors and genes involved in mitosis, telomere maintenance and DNA repair. Zygotic NR5A2 binds to both closed and open chromatin with other transcription factors, often at SINE B1/Alu repeats DNA elements, promoting chromatin accessibility at nearby regulatory regions. Also involved in the epiblast stage of development and embryonic stem cell pluripotency, by promoting expression of POU5F1/OCT4. Regulates other processes later in development, such as formation of connective tissue in lower jaw and middle ear, neural stem cell differentiation, ovarian follicle development and Sertoli cell differentiation. Involved in exocrine pancreas development and acinar cell differentiation. Acts as an essential transcriptional regulator of lipid metabolism. Key regulator of cholesterol 7-alpha-hydroxylase gene (CYP7A) expression in liver. Also acts as a negative regulator of inflammation in different organs, such as, liver and pancreas. Protects against intestinal inflammation via its ability to regulate glucocorticoid production. Plays an anti-inflammatory role during the hepatic acute phase response by acting as a corepressor: inhibits the hepatic acute phase response by preventing dissociation of the N-Cor corepressor complex. Acts as a regulator of immunity by promoting lymphocyte T-cell development, proliferation and effector functions. Also involved in resolution of endoplasmic reticulum stress in the liver. Its function is as follows. In constrast to isoform 1 and isoform 2, does not induce cholesterol 7-alpha-hydroxylase gene (CYP7A) promoter activity. (Microbial infection) Plays a crucial role for hepatitis B virus gene transcription and DNA replication. Mechanistically, synergistically cooperates with HNF1A to up-regulate the activity of one of the critical cis-elements in the hepatitis B virus genome enhancer II (ENII). This is Nuclear receptor subfamily 5 group A member 2 from Homo sapiens (Human).